The following is a 568-amino-acid chain: Natural resistance-associated macrophage protein 2 (568 aa).

Positions 1–40 (MVLGPEQKMSDDSVSGDHGESASLGNINPAYSNPSLSQSP) are disordered. Topologically, residues 1–69 (MVLGPEQKMS…EEYSCFSFRK (69 aa)) are cytoplasmic. Residues 8 to 20 (KMSDDSVSGDHGE) show a composition bias toward basic and acidic residues. Residues 23-40 (SLGNINPAYSNPSLSQSP) show a composition bias toward polar residues. Residues 70–90 (LWAFTGPGFLMSIAYLDPGNI) form a helical membrane-spanning segment. Topologically, residues 91-96 (ESDLQS) are extracellular. A helical transmembrane segment spans residues 97–117 (GAVAGFKLLWILLLATLVGLL). Residues 118 to 154 (LQRLAARLGVVTGLHLAEVCHRQYPKVPRVILWLMVE) are Cytoplasmic-facing. The chain crosses the membrane as a helical span at residues 155-175 (LAIIGSDMQEVIGSAIAINLL). Topologically, residues 176–179 (SVGR) are extracellular. Residues 180–200 (IPLWGGVLITIADTFVFLFLD) form a helical membrane-spanning segment. The Cytoplasmic segment spans residues 201 to 208 (KYGLRKLE). Residues 209 to 229 (AFFGFLITIMALTFGYEYVTV) traverse the membrane as a helical segment. Topologically, residues 230-255 (KPSQSQVLKGMFVPSCSGCRTPQIEQ) are extracellular. The chain crosses the membrane as a helical span at residues 256-276 (AVGIVGAVIMPHNMYLHSALV). Residues 277–301 (KSRQVNRNNKQEVREANKYFFIESC) are Cytoplasmic-facing. Residues 302 to 322 (IALFVSFIINVFVVSVFAEAF) form a helical membrane-spanning segment. Over 323-360 (FGKTNEQVVEVCTNTSSPHAGLFPKDNSTLAVDIYKGG) the chain is Extracellular. N-linked (GlcNAc...) asparagine glycans are attached at residues Asn-336 and Asn-349. A helical transmembrane segment spans residues 361–381 (VVLGCYFGPAALYIWAVGILA). Residues 382 to 408 (AGQSSTMTGTYSGQFVMEGFLNLKWSR) lie on the Cytoplasmic side of the membrane. The chain crosses the membrane as a helical span at residues 409–429 (FARVVLTRSIAIIPTLLVAVF). The Extracellular segment spans residues 430 to 440 (QDVEHLTGMND). Residues 441 to 461 (FLNVLQSLQLPFALIPILTFT) form a helical membrane-spanning segment. Topologically, residues 462–482 (SLRPVMSDFANGLGWRIAGGI) are cytoplasmic. The helical transmembrane segment at 483–503 (LVLIICSINMYFVVVYVRDLG) threads the bilayer. Over 504-506 (HVA) the chain is Extracellular. A helical membrane pass occupies residues 507–527 (LYVVAAVVSVAYLGFVFYLGW). Topologically, residues 528–568 (QCLIALGMSFLDCGHTCHLGLTAQPELYLLNTMDADSLVSR) are cytoplasmic. The required for early endosome targeting stretch occupies residues 555-559 (YLLNT). Phosphoserine occurs at positions 564 and 567.

Belongs to the NRAMP family. Forms a complex with NDFIP1 and NEDD4L, in cortical neurons, in response to iron and cobalt exposure; this interaction leads to SLC11A2 ubiquitination by NEDD4L and proteasome-dependent degradation. Interacts with NDFIP1, NDFIP2 and WWP2; this interaction leads to SLC11A2 ubiquitination by WWP2 and subsequent proteasome-dependent degradation. Interacts with COX2 and TOM6 at the outer mitochondrion membrane. Interacts with ARRDC1; this interaction regulates the incorporation of SLC11A2 into extracellular vesicles through an ubiquitination-dependent mechanism. Interacts with ARRDC4; controls the incorporation of SLC11A2 into extracellular vesicles through an ubiquitination-dependent mechanism. Ubiquitinated by WWP2. Post-translationally, N-glycosylated. As to expression, ubiquitously expressed. Expressed in erythroid progenitors.

Its subcellular location is the early endosome membrane. It localises to the apical cell membrane. The protein localises to the late endosome membrane. It is found in the lysosome membrane. The protein resides in the cell membrane. Its subcellular location is the extracellular vesicle membrane. It localises to the mitochondrion outer membrane. The protein localises to the golgi apparatus. It is found in the trans-Golgi network membrane. The protein resides in the recycling endosome membrane. It catalyses the reaction Fe(2+)(in) + H(+)(in) = Fe(2+)(out) + H(+)(out). It carries out the reaction Co(2+)(out) + H(+)(out) = Co(2+)(in) + H(+)(in). The enzyme catalyses Cd(2+)(out) + H(+)(out) = Cd(2+)(in) + H(+)(in). The catalysed reaction is Mn(2+)(in) + H(+)(in) = Mn(2+)(out) + H(+)(out). It catalyses the reaction Zn(2+)(out) + H(+)(out) = Zn(2+)(in) + H(+)(in). It carries out the reaction Ni(2+)(out) + H(+)(out) = Ni(2+)(in) + H(+)(in). The enzyme catalyses H(+)(in) = H(+)(out). The catalysed reaction is Fe(2+)(in) = Fe(2+)(out). Proton-coupled metal ion symporter operating with a proton to metal ion stoichiometry of 1:1. Selectively transports various divalent metal cations, in decreasing affinity: Cd(2+) &gt; Fe(2+) &gt; Co(2+), Mn(2+) &gt;&gt; Zn(2+), Ni(2+), VO(2+). Essential for maintenance of iron homeostasis by modulating intestinal absorption of dietary Fe(2+) and TF-associated endosomal Fe(2+) transport in erythroid precursors and other cells. Enables Fe(2+) and Mn(2+) ion entry into mitochondria, and is thus expected to promote mitochondrial heme synthesis, iron-sulfur cluster biogenesis and antioxidant defense. Can mediate uncoupled fluxes of either protons or metal ions. In Homo sapiens (Human), this protein is Natural resistance-associated macrophage protein 2 (SLC11A2).